A 201-amino-acid polypeptide reads, in one-letter code: Glycerol-3-phosphate acyltransferase (201 aa).

Helical transmembrane passes span 4–24 (IASL…LVSL), 84–104 (EIAM…FLAF), 116–136 (VLLA…LAVA), and 157–177 (AWFI…LLLV).

Belongs to the PlsY family. Probably interacts with PlsX.

The protein localises to the cell inner membrane. It catalyses the reaction an acyl phosphate + sn-glycerol 3-phosphate = a 1-acyl-sn-glycero-3-phosphate + phosphate. Its pathway is lipid metabolism; phospholipid metabolism. Functionally, catalyzes the transfer of an acyl group from acyl-phosphate (acyl-PO(4)) to glycerol-3-phosphate (G3P) to form lysophosphatidic acid (LPA). This enzyme utilizes acyl-phosphate as fatty acyl donor, but not acyl-CoA or acyl-ACP. The protein is Glycerol-3-phosphate acyltransferase of Laribacter hongkongensis (strain HLHK9).